Consider the following 264-residue polypeptide: Diphthine synthase (264 aa).

S-adenosyl-L-methionine is bound by residues leucine 9, aspartate 84, valine 87, 112 to 113, leucine 164, alanine 207, and histidine 232; that span reads SI.

Belongs to the diphthine synthase family. In terms of assembly, homodimer.

The catalysed reaction is 2-[(3S)-amino-3-carboxypropyl]-L-histidyl-[translation elongation factor 2] + 3 S-adenosyl-L-methionine = diphthine-[translation elongation factor 2] + 3 S-adenosyl-L-homocysteine + 3 H(+). It participates in protein modification; peptidyl-diphthamide biosynthesis. S-adenosyl-L-methionine-dependent methyltransferase that catalyzes the trimethylation of the amino group of the modified target histidine residue in translation elongation factor 2 (EF-2), to form an intermediate called diphthine. The three successive methylation reactions represent the second step of diphthamide biosynthesis. The chain is Diphthine synthase from Methanothermobacter thermautotrophicus (strain ATCC 29096 / DSM 1053 / JCM 10044 / NBRC 100330 / Delta H) (Methanobacterium thermoautotrophicum).